A 257-amino-acid polypeptide reads, in one-letter code: ATP synthase subunit a (257 aa).

6 helical membrane-spanning segments follow: residues 34-54 (ITNIGLYMTIAAFIAFYFSIL), 93-113 (YFPFMYTLFIFILINNLIGMV), 122-142 (HFILTFSLSFTVVLGATVLGF), 149-169 (FFSLFVPAGCPLGLLPLLVLI), 187-207 (ANILSGHMLLNILSGFTYNIM), and 210-230 (GIIFFILGLLPLAFIIAFSGL).

Belongs to the ATPase A chain family. As to quaternary structure, F-type ATPases have 2 components, CF(1) - the catalytic core - and CF(0) - the membrane proton channel. CF(1) has five subunits: alpha(3), beta(3), gamma(1), delta(1), epsilon(1). CF(0) has three main subunits: a, b and c.

It is found in the mitochondrion inner membrane. In terms of biological role, mitochondrial membrane ATP synthase (F(1)F(0) ATP synthase or Complex V) produces ATP from ADP in the presence of a proton gradient across the membrane which is generated by electron transport complexes of the respiratory chain. F-type ATPases consist of two structural domains, F(1) - containing the extramembraneous catalytic core and F(0) - containing the membrane proton channel, linked together by a central stalk and a peripheral stalk. During catalysis, ATP synthesis in the catalytic domain of F(1) is coupled via a rotary mechanism of the central stalk subunits to proton translocation. Key component of the proton channel; it may play a direct role in the translocation of protons across the membrane. The protein is ATP synthase subunit a (ATP6) of Cochliobolus heterostrophus (Southern corn leaf blight fungus).